We begin with the raw amino-acid sequence, 183 residues long: MTSKVANTEVAQPYAQALLSIAKSKSLTEEFGTDARTLLNLLTENQQLRNFIDNPFIAAENKKALIKQILSEASPYLRNFLLLLVDKRRIFFLPEILQQYLALLRQLNQTVLAEVTSAVALTEDQQQAVTEKVLALTKARQVELATKVDSDLIGGVIIKVGSQVIDSSIRGQLRRLSLRLSNS.

Belongs to the ATPase delta chain family. In terms of assembly, F-type ATPases have 2 components, F(1) - the catalytic core - and F(0) - the membrane proton channel. F(1) has five subunits: alpha(3), beta(3), gamma(1), delta(1), epsilon(1). CF(0) has four main subunits: a(1), b(1), b'(1) and c(10-14). The alpha and beta chains form an alternating ring which encloses part of the gamma chain. F(1) is attached to F(0) by a central stalk formed by the gamma and epsilon chains, while a peripheral stalk is formed by the delta, b and b' chains.

The protein resides in the cellular thylakoid membrane. F(1)F(0) ATP synthase produces ATP from ADP in the presence of a proton or sodium gradient. F-type ATPases consist of two structural domains, F(1) containing the extramembraneous catalytic core and F(0) containing the membrane proton channel, linked together by a central stalk and a peripheral stalk. During catalysis, ATP synthesis in the catalytic domain of F(1) is coupled via a rotary mechanism of the central stalk subunits to proton translocation. Functionally, this protein is part of the stalk that links CF(0) to CF(1). It either transmits conformational changes from CF(0) to CF(1) or is implicated in proton conduction. In Nostoc sp. (strain PCC 7120 / SAG 25.82 / UTEX 2576), this protein is ATP synthase subunit delta.